Here is a 315-residue protein sequence, read N- to C-terminus: tRNA pseudouridine synthase B (315 aa).

The active-site Nucleophile is the Asp47.

It belongs to the pseudouridine synthase TruB family. Type 1 subfamily.

The enzyme catalyses uridine(55) in tRNA = pseudouridine(55) in tRNA. Responsible for synthesis of pseudouridine from uracil-55 in the psi GC loop of transfer RNAs. In Shewanella pealeana (strain ATCC 700345 / ANG-SQ1), this protein is tRNA pseudouridine synthase B.